The primary structure comprises 430 residues: MSIITEVYAREVLDSRGNPTVEVEVYTEAGAFGRALVPSGASTGEYEAVELRDGDKARYLGKGVLKAVENVNDIIADKIIGFDVTDQIGIDKAMIELDGTPNKGKLGANAILGVSLAAARAAADELGVHLYEYLGGVNGKVLPVPMMNILNGGEHADNNVDVQEFMVMPVGAPNFKEALRMGAEILHALKAVLKGKGLNTGVGDEGGFAPNLKSNEEALETIMQAIKDAGYKPGEEVKLAMDAASSEFYNRETGKYELKGEGVTRTSEEMVTWYEEMITKYPIISIEDGLDENDWDGFKLLTERIGDRVQLVGDDLFVTNTTKLKEGIEKGIANSILIKVNQIGTLTETLDAIEMAKRAGYTAVISHRSGETEDSTIADIAVATNAGQIKTGAPTRTDRVAKYNQLLRIEDNLADLAEYHGNDTFYNLKK.

Gln163 is a (2R)-2-phosphoglycerate binding site. Glu205 (proton donor) is an active-site residue. The Mg(2+) site is built by Asp242, Glu287, and Asp314. Lys339, Arg368, Ser369, and Lys390 together coordinate (2R)-2-phosphoglycerate. Lys339 functions as the Proton acceptor in the catalytic mechanism.

Belongs to the enolase family. The cofactor is Mg(2+).

The protein resides in the cytoplasm. Its subcellular location is the secreted. It localises to the cell surface. It catalyses the reaction (2R)-2-phosphoglycerate = phosphoenolpyruvate + H2O. It participates in carbohydrate degradation; glycolysis; pyruvate from D-glyceraldehyde 3-phosphate: step 4/5. Functionally, catalyzes the reversible conversion of 2-phosphoglycerate (2-PG) into phosphoenolpyruvate (PEP). It is essential for the degradation of carbohydrates via glycolysis. This Listeria innocua serovar 6a (strain ATCC BAA-680 / CLIP 11262) protein is Enolase.